The chain runs to 352 residues: Enhancer of mRNA-decapping protein 1 (352 aa).

Disordered stretches follow at residues 1–258 (MMAH…PRNH) and 277–352 (QYPQ…SSKS). A compositionally biased stretch (low complexity) spans 71–80 (HTSSNTSNNK). Composition is skewed to polar residues over residues 93–104 (NFGNESSHQNGG) and 205–225 (TEPN…SVNV). Residues 289–309 (GGVYPMVAPQYQQQPQQHPQQ) are compositionally biased toward low complexity.

It belongs to the EDC family.

It localises to the cytoplasm. MRNA-binding protein which stimulates mRNA decapping. The protein is Enhancer of mRNA-decapping protein 1 (EDC1) of Debaryomyces hansenii (strain ATCC 36239 / CBS 767 / BCRC 21394 / JCM 1990 / NBRC 0083 / IGC 2968) (Yeast).